The following is a 367-amino-acid chain: Phosphoglycerate kinase (367 aa).

Residues V1, D2, F3, N4, R17, S40, H41, G43, R44, L98, R99, H146, and R147 each contribute to the (2R)-3-phosphoglycerate site. G190 serves as a coordination point for ADP. G190 contacts CDP. Residues A191 and K192 each coordinate AMP. A191 serves as a coordination point for ATP. Residue A191 coordinates Mg(2+). The Mg(2+) site is built by A194 and D195. D195 lines the CDP pocket. K196 lines the AMP pocket. K196 lines the ATP pocket. Residue G214 participates in ADP binding. Residue G214 coordinates CDP. AMP is bound by residues G215 and G289. 2 residues coordinate ATP: G215 and G289. CDP contacts are provided by G314 and F319. F319 provides a ligand contact to ADP. Residue E320 participates in AMP binding. Positions 320, 351, and 352 each coordinate ATP. Mg(2+) is bound at residue D351.

It belongs to the phosphoglycerate kinase family. Monomer. It depends on Mg(2+) as a cofactor.

The catalysed reaction is (2R)-3-phosphoglycerate + ATP = (2R)-3-phospho-glyceroyl phosphate + ADP. It participates in carbohydrate degradation; glycolysis; pyruvate from D-glyceraldehyde 3-phosphate: step 2/5. This is Phosphoglycerate kinase (PGK) from Paramecium primaurelia.